The chain runs to 242 residues: Small ribosomal subunit protein uS2 (242 aa).

This sequence belongs to the universal ribosomal protein uS2 family.

This is Small ribosomal subunit protein uS2 from Shewanella sediminis (strain HAW-EB3).